We begin with the raw amino-acid sequence, 503 residues long: Zinc metalloproteinase nas-14 (503 aa).

The N-terminal stretch at 1–25 (MRLLYSLFHCSAFLVGFTLSVGVLP) is a signal peptide. A Peptidase M12A domain is found at 116 to 312 (NLVTYPDKLW…KKVNKLYQCG (197 aa)). Disulfide bonds link C158–C311 and C182–C202. Residue N192 is glycosylated (N-linked (GlcNAc...) asparagine). Zn(2+) is bound at residue H210. Residue E211 is part of the active site. Zn(2+) contacts are provided by H214 and H220. Over residues 317–340 (TSSTTTTTTTTTTTTTTEEPTTTT) the composition is skewed to low complexity. Residues 317–377 (TSSTTTTTTT…TPKPVERSRN (61 aa)) form a disordered region. A compositionally biased stretch (basic and acidic residues) spans 342 to 351 (VEEKPKDKKV). A compositionally biased stretch (low complexity) spans 352–370 (SSTTTTTKKPTTTTTTTPK). Cystine bridges form between C380–C414, C387–C407, and C396–C411. The ShKT 1 domain maps to 380–414 (CEDLNAHCGMWEQLGHCQHSVKYMAHYCRKACNLC). Positions 422–464 (TTTTPKPVPRNKEKENKSASSTTRGTSTATSTTPKTTTTTTSA) are disordered. N437 carries an N-linked (GlcNAc...) asparagine glycan. Low complexity predominate over residues 439-464 (SASSTTRGTSTATSTTPKTTTTTTSA). 3 cysteine pairs are disulfide-bonded: C469-C503, C476-C496, and C485-C500. Residues 469-503 (CEDKNLFCSYWAKIGECNSESKFMKIFCKASCGKC) enclose the ShKT 2 domain.

Requires Zn(2+) as cofactor. Expressed in pharyngeal muscles and mc cells.

Its subcellular location is the secreted. Functionally, metalloprotease. In Caenorhabditis elegans, this protein is Zinc metalloproteinase nas-14 (nas-14).